Here is a 172-residue protein sequence, read N- to C-terminus: dCTP deaminase (172 aa).

Residues 97–102 (RSSFAR) and Asp113 contribute to the dCTP site. Glu123 (proton donor/acceptor) is an active-site residue. Residues Tyr155 and Gln162 each coordinate dCTP.

The protein belongs to the dCTP deaminase family. As to quaternary structure, homotrimer.

The catalysed reaction is dCTP + H2O + H(+) = dUTP + NH4(+). It functions in the pathway pyrimidine metabolism; dUMP biosynthesis; dUMP from dCTP (dUTP route): step 1/2. Its function is as follows. Catalyzes the deamination of dCTP to dUTP. This Metallosphaera sedula (strain ATCC 51363 / DSM 5348 / JCM 9185 / NBRC 15509 / TH2) protein is dCTP deaminase.